A 259-amino-acid chain; its full sequence is Dihydroorotate dehydrogenase B (NAD(+)), electron transfer subunit (259 aa).

Residues 3–103 enclose the FAD-binding FR-type domain; it reads KKQGRLTIVK…LGPLGQGFPL (101 aa). FAD-binding positions include 54–57, 71–73, and 78–79; these read RPIS, IYR, and GT. The [2Fe-2S] cluster site is built by Cys222, Cys227, Cys230, and Cys246.

This sequence belongs to the PyrK family. In terms of assembly, heterotetramer of 2 PyrK and 2 PyrD type B subunits. Requires [2Fe-2S] cluster as cofactor. FAD serves as cofactor.

It participates in pyrimidine metabolism; UMP biosynthesis via de novo pathway; orotate from (S)-dihydroorotate (NAD(+) route): step 1/1. Functionally, responsible for channeling the electrons from the oxidation of dihydroorotate from the FMN redox center in the PyrD type B subunit to the ultimate electron acceptor NAD(+). This Shouchella clausii (strain KSM-K16) (Alkalihalobacillus clausii) protein is Dihydroorotate dehydrogenase B (NAD(+)), electron transfer subunit.